The primary structure comprises 336 residues: Fimbrial adhesin PapGII (336 aa).

Residues 1 to 20 form the signal peptide; that stretch reads MKKWFPALLFSLCVSGESSA. 2 disulfide bridges follow: cysteine 64–cysteine 138 and cysteine 217–cysteine 249. D-galactose contacts are provided by residues glutamate 79 and 124-127; that span reads GYKW.

This sequence belongs to the adhesin PapG family.

It localises to the secreted. Its subcellular location is the fimbrium. In terms of biological role, tip adhesin component of type P pili that plays a critical role in kidney infection through targeted interaction with the globoseries glycolipids containing the Gal-alpha(1-4)-Gal disaccharide present on uroepithelial cells. In turn, transcriptionally regulates host gene expression in kidney cells, leading to inflammatory pathway activation and renal tissue damage. Acts thereby as key determinant of invasive uropathogenic E.coli (UPEC), which cause pyelonephritis and urinary-source bacteremia. This chain is Fimbrial adhesin PapGII, found in Escherichia coli O6:H1 (strain CFT073 / ATCC 700928 / UPEC).